The chain runs to 63 residues: High-potential iron-sulfur protein (63 aa).

4 residues coordinate [4Fe-4S] cluster: C23, C26, C41, and C56.

Belongs to the high-potential iron-sulfur protein (HiPIP) family. In terms of assembly, homodimer.

Functionally, specific class of high-redox-potential 4Fe-4S ferredoxins. Functions in anaerobic electron transport in most purple and in some other photosynthetic bacteria and in at least one genus (Paracoccus) of halophilic, denitrifying bacteria. The sequence is that of High-potential iron-sulfur protein (hip) from Rhodocyclus tenuis (Rhodospirillum tenue).